An 864-amino-acid polypeptide reads, in one-letter code: Probable M1 family aminopeptidase 2 (864 aa).

Residues Glu149 and 289–293 (GAMEN) contribute to the substrate site. His325 provides a ligand contact to Zn(2+). Catalysis depends on Glu326, which acts as the Proton acceptor. Zn(2+) is bound by residues His329 and Glu348.

Belongs to the peptidase M1 family. Zn(2+) serves as cofactor.

The sequence is that of Probable M1 family aminopeptidase 2 from Encephalitozoon cuniculi (strain GB-M1) (Microsporidian parasite).